A 109-amino-acid chain; its full sequence is Nucleoid-associated protein MADE_1013280 (109 aa).

Residues T86–F109 form a disordered region. Pro residues predominate over residues P99–F109.

It belongs to the YbaB/EbfC family. Homodimer.

Its subcellular location is the cytoplasm. The protein localises to the nucleoid. In terms of biological role, binds to DNA and alters its conformation. May be involved in regulation of gene expression, nucleoid organization and DNA protection. In Alteromonas mediterranea (strain DSM 17117 / CIP 110805 / LMG 28347 / Deep ecotype), this protein is Nucleoid-associated protein MADE_1013280.